The primary structure comprises 199 residues: Transgelin-3 (199 aa).

Residues 24-136 (ADLENKLVDW…RTLMALGSVA (113 aa)) enclose the Calponin-homology (CH) domain. Phosphoserine is present on Ser-163. The Calponin-like repeat unit spans residues 174-199 (IGLQMGSNKGASQAGMTGYGMPRQIM). Polar residues predominate over residues 178 to 188 (MGSNKGASQAG). A disordered region spans residues 178-199 (MGSNKGASQAGMTGYGMPRQIM).

This sequence belongs to the calponin family. As to expression, abundant and ubiquitous expression in neurons.

The chain is Transgelin-3 (Tagln3) from Rattus norvegicus (Rat).